We begin with the raw amino-acid sequence, 245 residues long: 5-oxoprolinase subunit A (245 aa).

It belongs to the LamB/PxpA family. Forms a complex composed of PxpA, PxpB and PxpC.

The enzyme catalyses 5-oxo-L-proline + ATP + 2 H2O = L-glutamate + ADP + phosphate + H(+). In terms of biological role, catalyzes the cleavage of 5-oxoproline to form L-glutamate coupled to the hydrolysis of ATP to ADP and inorganic phosphate. In Yersinia enterocolitica serotype O:8 / biotype 1B (strain NCTC 13174 / 8081), this protein is 5-oxoprolinase subunit A.